Reading from the N-terminus, the 365-residue chain is MSCPVPNPGILDIAPYTPGKSPVPEPGRKVFKLSANETPFGPSPKAIEAFKKVADHLEDYPEGTSRVLREAIGRTFGLDPNRIICGAGSDEILNLLAHTYLGQGDEAISTTHGFLVYPIATMAVGARNVIAQEKNLTCDVDAILKAVTPKTKLVWLANPNNPTGTYIPFDEVKRLRAGLPSHVLLVLDAAYCDYVSRNDYEMGIELVATTENTVVTHTFSKIHGLAALRIGWMFGPEHIIDAVNRIRGPFNVSTPAMYAAVAAIEDTAHQAMSKQFTETWRNWLTEEIGKLGLKVTPSVANFVLIHFPTDRGRTSDDADAFLTKRGLVLRALKNYGLPHSLRMTIGTEEANRLVVDGLRDFMAGK.

K221 carries the post-translational modification N6-(pyridoxal phosphate)lysine.

It belongs to the class-II pyridoxal-phosphate-dependent aminotransferase family. Histidinol-phosphate aminotransferase subfamily. As to quaternary structure, homodimer. Pyridoxal 5'-phosphate serves as cofactor.

The enzyme catalyses L-histidinol phosphate + 2-oxoglutarate = 3-(imidazol-4-yl)-2-oxopropyl phosphate + L-glutamate. The protein operates within amino-acid biosynthesis; L-histidine biosynthesis; L-histidine from 5-phospho-alpha-D-ribose 1-diphosphate: step 7/9. This Bradyrhizobium diazoefficiens (strain JCM 10833 / BCRC 13528 / IAM 13628 / NBRC 14792 / USDA 110) protein is Histidinol-phosphate aminotransferase 2 (hisC2).